Consider the following 613-residue polypeptide: DNA mismatch repair protein MutL (613 aa).

It belongs to the DNA mismatch repair MutL/HexB family.

In terms of biological role, this protein is involved in the repair of mismatches in DNA. It is required for dam-dependent methyl-directed DNA mismatch repair. May act as a 'molecular matchmaker', a protein that promotes the formation of a stable complex between two or more DNA-binding proteins in an ATP-dependent manner without itself being part of a final effector complex. This Flavobacterium psychrophilum (strain ATCC 49511 / DSM 21280 / CIP 103535 / JIP02/86) protein is DNA mismatch repair protein MutL.